Reading from the N-terminus, the 156-residue chain is Transcription antitermination protein NusB (156 aa).

Belongs to the NusB family.

In terms of biological role, involved in transcription antitermination. Required for transcription of ribosomal RNA (rRNA) genes. Binds specifically to the boxA antiterminator sequence of the ribosomal RNA (rrn) operons. The chain is Transcription antitermination protein NusB from Rickettsia africae (strain ESF-5).